Consider the following 169-residue polypeptide: Der GTPase-activating protein YihI (169 aa).

2 disordered regions span residues 1–98 (MKPS…PQAE) and 144–169 (GLSY…LRGN). Positions 10–19 (SKGHAKARRK) are enriched in basic residues. Residues 20-30 (TREELDQEARD) show a composition bias toward basic and acidic residues. Positions 31-40 (RKRQKKRRGH) are enriched in basic residues. The segment covering 49–58 (GNTTSGSKGQ) has biased composition (polar residues). A compositionally biased stretch (acidic residues) spans 147 to 159 (YDDDEEEEEDEKQ). Residues 160-169 (EDMMRLLRGN) are compositionally biased toward basic and acidic residues.

The protein belongs to the YihI family. In terms of assembly, interacts with Der.

Its function is as follows. A GTPase-activating protein (GAP) that modifies Der/EngA GTPase function. May play a role in ribosome biogenesis. This chain is Der GTPase-activating protein YihI, found in Escherichia coli O139:H28 (strain E24377A / ETEC).